A 229-amino-acid polypeptide reads, in one-letter code: HTH-type transcriptional regulator HbdR (229 aa).

In terms of domain architecture, HTH tetR-type spans 20–80; that stretch reads EERRHQIISA…LTLKNVLDTY (61 aa). Positions 43–62 form a DNA-binding region, H-T-H motif; that stretch reads TILQIAREAKVSTGLIYQYF.

In terms of assembly, homodimer in solution.

Its activity is regulated as follows. Activity is regulated by the effector molecules 3-hydroxybenzoyl-CoA and benzoyl-CoA, which bind to HbdR, alleviating its repression on the three target promoters and inducing the expression of the hbd genes. In terms of biological role, transcriptional regulator that controls the expression of the hbd cluster, which contains three catabolic operons and is responsible for the anaerobic degradation of 3-hydroxybenzoate. HbdR suppresses the activity of the three catabolic promoters (PhbdN, PhbdE and PhbdH) by binding to a conserved palindromic operator box. In addition, it slightly increases activity of its own promoter (PhbdR). The HbdR-mediated repression of hbd genes may play a crucial biological role in maintaining requisite hydroxybenzoate levels in the cell. This is HTH-type transcriptional regulator HbdR from Aromatoleum sp. (strain CIB) (Azoarcus sp. (strain CIB)).